A 77-amino-acid chain; its full sequence is Protein RADIALIS-like 4 (77 aa).

The SANT domain occupies 6-61 (MSTSSWTAREDKQFEMALAKFDKDTPDRWQKIARAVGGKSTEEVKRHYELLLRDVN).

As to expression, expressed just outside the vascular bundles in the rosette stem and the leaf traces. Not detected in floral primordia.

The protein localises to the nucleus. Probable transcription factor. The protein is Protein RADIALIS-like 4 (RL4) of Arabidopsis thaliana (Mouse-ear cress).